The primary structure comprises 755 residues: Cellulose synthase-like protein B4 (755 aa).

A run of 2 helical transmembrane segments spans residues 24-44 (AVDLTILGLLLSLLLYRILHV) and 49-69 (TVWIVAFLCETCFTFVWLLIT). Active-site residues include aspartate 136 and aspartate 461. The next 6 membrane-spanning stretches (helical) occupy residues 533–556 (AYLYVFSWGLRSIPELFYCLLPAY), 569–589 (VYLGIIITLVGIHCLYTLWEF), 615–635 (LFSVLDVILKLLGISKTVFIV), 674–694 (FLPGTFIVLVNLAALAGCLVG), 702–722 (GSGLAEACGCILVVILFLPFL), and 733–753 (IPFSTLSKAAFLAALFVVLSV).

The protein belongs to the glycosyltransferase 2 family. Plant cellulose synthase-like B subfamily.

It is found in the golgi apparatus membrane. Thought to be a Golgi-localized beta-glycan synthase that polymerize the backbones of noncellulosic polysaccharides (hemicelluloses) of plant cell wall. In Arabidopsis thaliana (Mouse-ear cress), this protein is Cellulose synthase-like protein B4 (CSLB4).